A 922-amino-acid polypeptide reads, in one-letter code: Coronin-7 (922 aa).

WD repeat units follow at residues 75–115 (CHSD…EALP), 124–163 (PEEL…PLTE), 166–205 (AHKD…QASQ), and 209–253 (AHEN…SALA). The disordered stretch occupies residues 419–467 (DTDLSEGFSSPSSLMSPSTPSSLGPSLSSTSGIGTSPSQRSLQSLLGPS). Over residues 427-456 (SSPSSLMSPSTPSSLGPSLSSTSGIGTSPS) the composition is skewed to low complexity. Ser-459 and Ser-462 each carry phosphoserine. A Glycyl lysine isopeptide (Lys-Gly) (interchain with G-Cter in ubiquitin) cross-link involves residue Lys-469. WD repeat units follow at residues 539–581 (QNGT…NVLT), 589–629 (GHTE…ERLK), 632–671 (GHQD…LPLQ), and 725–765 (DVAP…PFFL). Residues 858 to 922 (GMTPVSQAPR…FEGVDEDEWD (65 aa)) are disordered. A compositionally biased stretch (basic and acidic residues) spans 881 to 893 (LEEKSDQQKKEEL). Ser-912 bears the Phosphoserine mark.

Belongs to the WD repeat coronin family. In terms of assembly, interacts with clathrin adapter AP1 complex. This interaction takes place at Golgi membranes and not AP1-positive endosomal membranes. Interacts (when ubiquitinated at Lys-469) with EPS15. Post-translationally, the membrane-associated form is phosphorylated on tyrosine residues. Ubiquitinated via 'Lys-33'-linked ubiquitin chains by the BCR(KLHL20) E3 ubiquitin ligase complex: 'Lys-33'-linked ubiquitination promotes interaction with EPS15 and facilitates actin polymerization at the trans-Golgi network, thereby facilitating post-Golgi trafficking. Deubiquitinated by ZRANB1/TRABID. In terms of tissue distribution, in the adult, widely expressed with highest levels in brain, thymus and kidney and low levels in skeletal and heart muscle. Not expressed in lung. In the eye, strongly expressed in the outer plexiform layer of the retina. In the intestine, expressed both in terminally differentiated epithelial cells and in crypt epithelium. In the embryo, strongest expression is seen in brain, thymus, intestine, apical epidermal layers of the skin and developing lens fibers of the eye.

It is found in the golgi apparatus membrane. The protein localises to the golgi apparatus. Its subcellular location is the trans-Golgi network. It localises to the cytoplasmic vesicle. The protein resides in the cytoplasm. It is found in the cytosol. F-actin regulator involved in anterograde Golgi to endosome transport: upon ubiquitination via 'Lys-33'-linked ubiquitin chains by the BCR(KLHL20) E3 ubiquitin ligase complex, interacts with EPS15 and localizes to the trans-Golgi network, where it promotes actin polymerization, thereby facilitating post-Golgi trafficking. May play a role in the maintenance of the Golgi apparatus morphology. In Mus musculus (Mouse), this protein is Coronin-7 (Coro7).